We begin with the raw amino-acid sequence, 363 residues long: Isopentenyl-diphosphate delta-isomerase (363 aa).

A substrate-binding site is contributed by 6 to 7 (RK). FMN-binding positions include 64 to 66 (AMT), S94, and N123. Q153 serves as a coordination point for substrate. E154 lines the Mg(2+) pocket. Residues K185, S210, T215, 259–261 (GVR), and 280–281 (SA) contribute to the FMN site.

This sequence belongs to the IPP isomerase type 2 family. As to quaternary structure, homooctamer. Dimer of tetramers. Requires Mg(2+) as cofactor. FMN serves as cofactor. NADPH is required as a cofactor.

The protein localises to the cytoplasm. The enzyme catalyses isopentenyl diphosphate = dimethylallyl diphosphate. Involved in the biosynthesis of isoprenoids. Catalyzes the 1,3-allylic rearrangement of the homoallylic substrate isopentenyl (IPP) to its allylic isomer, dimethylallyl diphosphate (DMAPP). This is Isopentenyl-diphosphate delta-isomerase from Streptomyces sp. (strain CL190).